The following is a 457-amino-acid chain: Acetylcholine receptor subunit alpha-1-B (457 aa).

The N-terminal stretch at 1 to 20 (MDYTASCLIFLFIAAGTVFG) is a signal peptide. Over 21–230 (TDHETRLIGD…ITYHFVLQRL (210 aa)) the chain is Extracellular. 2 cysteine pairs are disulfide-bonded: C148/C162 and C212/C213. N-linked (GlcNAc...) asparagine glycosylation is present at N161. 3 helical membrane passes run 231-255 (PLYF…VFYL), 263-281 (MTLS…LVIV), and 297-316 (YMLF…VIVI). Residues 317–428 (NTHHRSPSTH…WKFVAMVLDH (112 aa)) lie on the Cytoplasmic side of the membrane. Residues 429 to 447 (ILLAVFMTVCVIGTLAVFA) traverse the membrane as a helical segment.

Belongs to the ligand-gated ion channel (TC 1.A.9) family. Acetylcholine receptor (TC 1.A.9.1) subfamily. Alpha-1/CHRNA1 sub-subfamily. One of the alpha chains that assemble within the acetylcholine receptor, a pentamer of two alpha chains, a beta, a delta, and a gamma or epsilon chains.

The protein resides in the postsynaptic cell membrane. The protein localises to the cell membrane. It catalyses the reaction K(+)(in) = K(+)(out). The catalysed reaction is Na(+)(in) = Na(+)(out). Its function is as follows. Upon acetylcholine binding, the AChR responds by an extensive change in conformation that affects all subunits and leads to opening of an ion-conducting channel across the plasma membrane. The chain is Acetylcholine receptor subunit alpha-1-B (chrna1-b) from Xenopus laevis (African clawed frog).